A 72-amino-acid chain; its full sequence is Aurein-2.3 (72 aa).

The first 22 residues, 1–22, serve as a signal peptide directing secretion; sequence MAFLKKSLFLVLFLGLVSLSIC. A propeptide spanning residues 23-49 is cleaved from the precursor; that stretch reads EKEKRQNGEDEDENEAANHEEGSEEKR. The disordered stretch occupies residues 27 to 47; the sequence is RQNGEDEDENEAANHEEGSEE. Basic and acidic residues predominate over residues 38 to 47; sequence AANHEEGSEE. Leucine amide is present on L65. Positions 69–72 are excised as a propeptide; that stretch reads NDVE.

Amidation is essential for antibacterial activity against Gram-positive bacteria. In terms of tissue distribution, expressed by the skin dorsal glands.

The protein resides in the secreted. It localises to the target cell membrane. Its function is as follows. Amphipathic alpha-helical antimicrobial peptide with weak to moderate activity against Gram-positive bacteria, and no activity against Gram-negative bacteria. Probably acts by disturbing membrane functions with its amphipathic structure. Strongly inhibits the formation of NO by neuronal nitric oxide synthase (nNOS) at micromolar concentrations. Acts by a non-competitive mechanism, probably by binding to calcium/calmodulin and as a consequence blocking calmodulin attachment to nNOS. The polypeptide is Aurein-2.3 (Ranoidea aurea (Green and golden bell frog)).